The chain runs to 128 residues: Azurin (128 aa).

The region spanning 1 to 128 is the Plastocyanin-like domain; that stretch reads AECKTTIDST…SMMKGTVTLK (128 aa). The cysteines at positions 3 and 26 are disulfide-linked. Residues histidine 46, cysteine 112, histidine 117, and methionine 121 each coordinate Cu cation.

It is found in the periplasm. Its function is as follows. Transfers electrons from cytochrome c551 to cytochrome oxidase. This Pseudomonas fluorescens biotype B protein is Azurin.